The primary structure comprises 599 residues: Zinc finger BED domain-containing protein 3 (599 aa).

Positions 70–104 (LNGGMGSPGNGPGTPLSRNNYAHHHQQHQNQQHVG) are disordered. Over residues 72 to 81 (GGMGSPGNGP) the composition is skewed to gly residues. The BED-type zinc-finger motif lies at 123–176 (VKTAKVWRYFDELPTIEQAAECRICRKKIKATNSSTTGMIRHLRSCHVQEYQLV). Residues C144, C147, H164, and H169 each coordinate Zn(2+). 2 disordered regions span residues 208-283 (GIEN…QCQN) and 440-491 (ATSS…SSID). Low complexity-rich tracts occupy residues 223–246 (SQKS…SHFS) and 268–283 (SNSI…QCQN). Residues 440–455 (ATSSYEDVSVNESQMA) are compositionally biased toward polar residues. Over residues 460-483 (GDEEEEIMEEEVEEDENVEIEDDT) the composition is skewed to acidic residues.

As to expression, expressed in neuronal cell bodies in the ventral cord and HSN neurons.

Its subcellular location is the nucleus. Probable transcription factor. Involved in vulval organogenesis. During vulval development, may play a role in the regulation of cell cycle regulators such as cul-1. Positively modulates expression of homeobox protein lin-39, perhaps by binding to regulatory regions of the lin-39 gene, acting in the vulval lineage. Plays a role in larval molting. This chain is Zinc finger BED domain-containing protein 3, found in Caenorhabditis elegans.